Reading from the N-terminus, the 465-residue chain is Chromosomal replication initiator protein DnaA (465 aa).

The tract at residues 1–87 (MLWTDCLTRL…RPGSILSSSE (87 aa)) is domain I, interacts with DnaA modulators. The tract at residues 81–123 (SILSSSEQPATTTAALQTAPIPQPAKGKREPEPVANTAVSSKS) is disordered. Residues 88–100 (QPATTTAALQTAP) are compositionally biased toward low complexity. Residues 88–127 (QPATTTAALQTAPIPQPAKGKREPEPVANTAVSSKSSKKK) are domain II. The domain III, AAA+ region stretch occupies residues 128–345 (LLNPQFTFSL…GALNKVVAIS (218 aa)). Residues Gly173, Gly175, Lys176, and Thr177 each contribute to the ATP site. Residues 346–465 (RFKGAPIDLD…YKNLLRLLQS (120 aa)) are domain IV, binds dsDNA.

It belongs to the DnaA family. As to quaternary structure, oligomerizes as a right-handed, spiral filament on DNA at oriC.

The protein localises to the cytoplasm. Functionally, plays an essential role in the initiation and regulation of chromosomal replication. ATP-DnaA binds to the origin of replication (oriC) to initiate formation of the DNA replication initiation complex once per cell cycle. Binds the DnaA box (a 9 base pair repeat at the origin) and separates the double-stranded (ds)DNA. Forms a right-handed helical filament on oriC DNA; dsDNA binds to the exterior of the filament while single-stranded (ss)DNA is stabiized in the filament's interior. The ATP-DnaA-oriC complex binds and stabilizes one strand of the AT-rich DNA unwinding element (DUE), permitting loading of DNA polymerase. After initiation quickly degrades to an ADP-DnaA complex that is not apt for DNA replication. Binds acidic phospholipids. The chain is Chromosomal replication initiator protein DnaA from Acinetobacter baumannii (strain SDF).